Reading from the N-terminus, the 882-residue chain is DNA mismatch repair protein MutS (882 aa).

The disordered stretch occupies residues 1 to 22 (MTLPSDFPLEPPATNKDPHRDY). Residue 662–669 (GPNASGKS) participates in ATP binding.

The protein belongs to the DNA mismatch repair MutS family.

This protein is involved in the repair of mismatches in DNA. It is possible that it carries out the mismatch recognition step. This protein has a weak ATPase activity. The sequence is that of DNA mismatch repair protein MutS from Microcystis aeruginosa (strain NIES-843 / IAM M-2473).